A 371-amino-acid polypeptide reads, in one-letter code: Protein STRICTOSIDINE SYNTHASE-LIKE 7 (371 aa).

An N-terminal signal peptide occupies residues 1 to 25; sequence MPVLFSSRSLILSIIVPLLISIALY. N-linked (GlcNAc...) asparagine glycosylation is found at Asn101, Asn137, and Asn285. Tyr303 is subject to Phosphotyrosine.

This sequence belongs to the strictosidine synthase family.

The protein localises to the vacuole. This chain is Protein STRICTOSIDINE SYNTHASE-LIKE 7, found in Arabidopsis thaliana (Mouse-ear cress).